The primary structure comprises 365 residues: PDZ and LIM domain protein 3 (365 aa).

One can recognise a PDZ domain in the interval 1–84; the sequence is MPQNVILPGP…QLCLKIDRAE (84 aa). Serine 18 is modified (phosphoserine). The disordered stretch occupies residues 126–156; it reads FIIPGRSSGCSTPSGIDGGSGRSTPSSVSTL. Polar residues predominate over residues 147 to 156; that stretch reads RSTPSSVSTL. The LIM zinc-binding domain maps to 293-352; it reads PLCDKCGSGIVGAVVKARDKYRHPECFVCADCNLNLKQKGYFFVEGELYCETHARARMRP.

In terms of assembly, interacts with ACTN2. Forms a heterodimer with PDLIM4 (via LIM domain).

It localises to the cytoplasm. The protein resides in the myofibril. Its subcellular location is the sarcomere. The protein localises to the z line. In terms of biological role, may play a role in the organization of actin filament arrays within muscle cells. This is PDZ and LIM domain protein 3 (PDLIM3) from Sus scrofa (Pig).